Consider the following 757-residue polypeptide: Dynamin-related protein DNM1 (757 aa).

The Dynamin-type G domain maps to 25–333 (TLDLPILAVV…LLSHIRDKLP (309 aa)). The segment at 35 to 42 (GSQSSGKS) is G1 motif. 35–42 (GSQSSGKS) lines the GTP pocket. A G2 motif region spans residues 61-63 (VTR). The interval 175 to 178 (DLPG) is G3 motif. GTP-binding positions include 175–179 (DLPGI) and 244–247 (TKLD). The segment at 244-247 (TKLD) is G4 motif. Residues 274 to 277 (VNRS) are G5 motif. Residues 557 to 597 (SKLSQQENGQTNGINGTSSISSNIDQDSAKNSDYDDDGIDA) are disordered. The span at 567 to 580 (TNGINGTSSISSNI) shows a compositional bias: low complexity. At Ser629 the chain carries Phosphoserine. Residues 670 to 757 (CELIKRLIVS…KAATLISNIL (88 aa)) enclose the GED domain.

It belongs to the TRAFAC class dynamin-like GTPase superfamily. Dynamin/Fzo/YdjA family. In terms of assembly, interacts with FIS1 and MDV1.

It is found in the mitochondrion outer membrane. The catalysed reaction is GTP + H2O = GDP + phosphate + H(+). In terms of biological role, microtubule-associated force-producing protein that participates mitochondrial fission. Fission of mitochondria occurs in many cell types and constitutes an important step in mitochondria morphology, which is balanced between fusion and fission. Functions antagonistically with FZO1. This chain is Dynamin-related protein DNM1 (DNM1), found in Saccharomyces cerevisiae (strain ATCC 204508 / S288c) (Baker's yeast).